A 208-amino-acid polypeptide reads, in one-letter code: GTP cyclohydrolase 1 (208 aa).

3 residues coordinate Zn(2+): C98, H101, and C169.

The protein belongs to the GTP cyclohydrolase I family. As to quaternary structure, toroid-shaped homodecamer, composed of two pentamers of five dimers.

The catalysed reaction is GTP + H2O = 7,8-dihydroneopterin 3'-triphosphate + formate + H(+). It functions in the pathway cofactor biosynthesis; 7,8-dihydroneopterin triphosphate biosynthesis; 7,8-dihydroneopterin triphosphate from GTP: step 1/1. This Agrobacterium fabrum (strain C58 / ATCC 33970) (Agrobacterium tumefaciens (strain C58)) protein is GTP cyclohydrolase 1.